A 288-amino-acid polypeptide reads, in one-letter code: Glycine--tRNA ligase alpha subunit (288 aa).

Belongs to the class-II aminoacyl-tRNA synthetase family. As to quaternary structure, tetramer of two alpha and two beta subunits.

The protein localises to the cytoplasm. The catalysed reaction is tRNA(Gly) + glycine + ATP = glycyl-tRNA(Gly) + AMP + diphosphate. The chain is Glycine--tRNA ligase alpha subunit from Desulfatibacillum aliphaticivorans.